The sequence spans 628 residues: Voltage-gated potassium channel KCNC4 (628 aa).

2 disordered regions span residues 1–24 (MISS…SKTC) and 62–88 (LAWL…GSSG). The inactivation gate stretch occupies residues 1–28 (MISSVCVSSYRGRKSGNKPPSKTCLKEE). At 1 to 230 (MISSVCVSSY…EDPYSSRAAR (230 aa)) the chain is on the cytoplasmic side. Residues Ser-8, Ser-9, Ser-15, and Ser-21 each carry the phosphoserine modification. Residues 77–88 (DGGGAGSSGSSG) are compositionally biased toward gly residues. Zn(2+)-binding residues include His-120, Cys-126, Cys-147, and Cys-148. A helical membrane pass occupies residues 231–251 (VVAFASLFFILVSITTFCLET). N-linked (GlcNAc...) asparagine glycosylation is found at Asn-260 and Asn-269. The helical transmembrane segment at 282 to 302 (EPILTYIEGVCVMWFTLEFLV) threads the bilayer. Over 303 to 316 (RIVCCPDTLDFVKN) the chain is Cytoplasmic. The chain crosses the membrane as a helical span at residues 317–337 (LLNIIDFVAILPFYLEVGLSG). Residues 349–368 (FLRVVRFVRILRIFKLTRHF) traverse the membrane as a helical; Voltage-sensor segment. The Cytoplasmic segment spans residues 369 to 384 (VGLRVLGHTLRASTNE). A helical transmembrane segment spans residues 385–405 (FLLLIIFLALGVLIFATMIYY). Residues Thr-440, Leu-441, Gly-442, and Tyr-443 each contribute to the K(+) site. Residues 440–445 (TLGYGD) carry the Selectivity filter motif. A helical membrane pass occupies residues 456–476 (VGALCALAGVLTIAMPVPVIV). The Cytoplasmic segment spans residues 477-628 (NNFGMYYSLA…CVPVSHTCAL (152 aa)). A disordered region spans residues 493–584 (PKKRKKHVPR…RRALRRSGTR (92 aa)). The segment covering 531-546 (AREEGVVERKRADSKQ) has biased composition (basic and acidic residues).

Belongs to the potassium channel family. C (Shaw) (TC 1.A.1.2) subfamily. Kv3.4/KCNC4 sub-subfamily. As to quaternary structure, homotetramer. Heterotetramer of potassium channel proteins. Phosphorylation of serine residues in the inactivation gate inhibits rapid channel closure.

It localises to the membrane. The catalysed reaction is K(+)(in) = K(+)(out). In terms of biological role, voltage-gated potassium channel that opens in response to the voltage difference across the membrane, forming a potassium-selective channel through which potassium ions pass in accordance with their electrochemical gradient. The channel displays rapid activation and inactivation kinetics. This Mus musculus (Mouse) protein is Voltage-gated potassium channel KCNC4.